We begin with the raw amino-acid sequence, 99 residues long: Small ribosomal subunit protein bS16 (99 aa).

Residues 80-99 are disordered; it reads PPRQQNEAKRETAETAQPEA.

The protein belongs to the bacterial ribosomal protein bS16 family.

The chain is Small ribosomal subunit protein bS16 from Thermomicrobium roseum (strain ATCC 27502 / DSM 5159 / P-2).